Consider the following 400-residue polypeptide: Apolipoprotein N-acyltransferase (400 aa).

A run of 5 helical transmembrane segments spans residues 16–36 (AISP…VLFV), 42–62 (FGVG…GLRY), 67–87 (FLIP…FYIG), 97–117 (FAFL…IVPE), and 123–143 (SYIG…WILF). In terms of domain architecture, CN hydrolase spans 181-400 (AQSAVSQDFD…AIITPFVSSR (220 aa)). The active-site Proton acceptor is the E222. K283 is a catalytic residue. C332 acts as the Nucleophile in catalysis. A helical transmembrane segment spans residues 377–397 (YGSVIFHATNLSPAAIITPFV).

The protein belongs to the CN hydrolase family. Apolipoprotein N-acyltransferase subfamily.

The protein localises to the cell inner membrane. It carries out the reaction N-terminal S-1,2-diacyl-sn-glyceryl-L-cysteinyl-[lipoprotein] + a glycerophospholipid = N-acyl-S-1,2-diacyl-sn-glyceryl-L-cysteinyl-[lipoprotein] + a 2-acyl-sn-glycero-3-phospholipid + H(+). It functions in the pathway protein modification; lipoprotein biosynthesis (N-acyl transfer). Catalyzes the phospholipid dependent N-acylation of the N-terminal cysteine of apolipoprotein, the last step in lipoprotein maturation. The chain is Apolipoprotein N-acyltransferase from Helicobacter hepaticus (strain ATCC 51449 / 3B1).